Consider the following 177-residue polypeptide: Probable chemoreceptor glutamine deamidase CheD (177 aa).

Belongs to the CheD family.

It carries out the reaction L-glutaminyl-[protein] + H2O = L-glutamyl-[protein] + NH4(+). Probably deamidates glutamine residues to glutamate on methyl-accepting chemotaxis receptors (MCPs), playing an important role in chemotaxis. The polypeptide is Probable chemoreceptor glutamine deamidase CheD (Pseudomonas savastanoi pv. phaseolicola (strain 1448A / Race 6) (Pseudomonas syringae pv. phaseolicola (strain 1448A / Race 6))).